Consider the following 1053-residue polypeptide: MSESKNSGENTLSVTPTKTLSLKRPVEAGTVRQSFPHGRSKAVVVEKVKRRPIGPGGDGHPAREAAPTPAPAATVTAPPPAQRPAAPNPTAAPTTPPAAAVPNVPPPAPRAEVAPPSAQPAPAAPTAATPPAQPKAEPVPAPIAAQAAPAPVPPVPAPSAPVPSTSAAPAAPKPAPAPVSQAKPIQTAPVQTAPAAQASASQTTGPRPVAAGPRPATGAAKQATATPQRGAASPAQRPQTGGGQRSGGQQRNQSGGRGGPGRGESGSSRTPTGVVLRSLTDEEREARARALSGARIREEEDRKRAAAEAKAREEREAREREERAAAEARKAEEDARRLQEQEAKRRSEQEAKRRLSGGEPAPAASPSVARKPVMTATAAAPAAAAPSGRAAVTDEEETKRVIRRPGMPTKVIVPPRPTKGAEPKSRGRLTVATATGGEEEERTRSVAAFRRRQQRLRGHVNEVKEKLSREVILPETITIQELANRMSERGVDVIKLLMKQGQMAKITDVIDADTAQLIAEELGHTVKRVAESDVEEGLFDTVDVEEHLVPRPPVVTIMGHVDHGKTSLLDAIRHANVVSGEAGGITQHIGAYQITAPNGSPITFIDTPGHAAFTAMRARGAKVTDIVVLVVAADDGVMPQTAEAVAHARAAGVPIIVAINKIDKPDAKPERIRSELLQYEVQVESLGGDTLEVEVSATKKINLDKLLDLIALQAELLDLKANPDRAAEGTVIEASLDKGRGPVATVLVQRGTLRVGDIIVGGTHWGHVRALIDDKGATRSEAGPSMPVEVLGFSGSPEAGDRVAVVETEARAREITEYRERQRREQAAARGGQARGSLADMMSQLKNAGRKEFPLVIKGDVQGSVEAVVATLEKLNTDEVAARIIHAGVGGITESDITLAQAAGAVVLGFNVRALKEARALAEQQGIEIRYYNIIYNLVDDVKAAMSGLLAPTLREEMLGNAEILEVFNISKVGKVAGCRVTDGRVERGAHVRLIRDNVVVHEGKLSTLKRFKDEVKEVVAGQECGMAFESYQDMRPHDVIECYNVHEIKRSL.

Residues 1-20 are compositionally biased toward polar residues; sequence MSESKNSGENTLSVTPTKTL. The interval 1–442 is disordered; the sequence is MSESKNSGEN…TATGGEEEER (442 aa). Low complexity-rich tracts occupy residues 64 to 76 and 83 to 102; these read EAAPTPAPAATVT and RPAAPNPTAAPTTPPAAAVP. Pro residues-rich tracts occupy residues 131-141 and 150-161; these read PAQPKAEPVPA and APVPPVPAPSAP. Positions 178–220 are enriched in low complexity; that stretch reads PVSQAKPIQTAPVQTAPAAQASASQTTGPRPVAAGPRPATGAA. The segment covering 255 to 264 has biased composition (gly residues); it reads GGRGGPGRGE. Composition is skewed to basic and acidic residues over residues 279–288 and 295–353; these read LTDEEREARA and RIRE…EAKR. Residues 375–386 show a composition bias toward low complexity; the sequence is TATAAAPAAAAP. A tr-type G domain is found at 550–720; the sequence is PRPPVVTIMG…ALQAELLDLK (171 aa). The G1 stretch occupies residues 559–566; that stretch reads GHVDHGKT. 559–566 contributes to the GTP binding site; the sequence is GHVDHGKT. Positions 584–588 are G2; that stretch reads GITQH. The interval 606–609 is G3; that stretch reads DTPG. GTP-binding positions include 606–610 and 660–663; these read DTPGH and NKID. A G4 region spans residues 660 to 663; sequence NKID. Positions 696–698 are G5; that stretch reads SAT.

The protein belongs to the TRAFAC class translation factor GTPase superfamily. Classic translation factor GTPase family. IF-2 subfamily.

The protein localises to the cytoplasm. Its function is as follows. One of the essential components for the initiation of protein synthesis. Protects formylmethionyl-tRNA from spontaneous hydrolysis and promotes its binding to the 30S ribosomal subunits. Also involved in the hydrolysis of GTP during the formation of the 70S ribosomal complex. The polypeptide is Translation initiation factor IF-2 (Beijerinckia indica subsp. indica (strain ATCC 9039 / DSM 1715 / NCIMB 8712)).